A 342-amino-acid polypeptide reads, in one-letter code: Phospho-N-acetylmuramoyl-pentapeptide-transferase (342 aa).

10 helical membrane passes run 8–28, 58–78, 86–106, 116–136, 152–172, 184–204, 213–233, 242–262, 267–287, and 318–338; these read VAQP…VIAP, GIPS…TAIF, IWVI…DDYL, ISLE…LIFL, GLID…VGSS, LATL…HLSL, VVGA…LSFL, VFMG…MSVM, FIYA…MAQV, and IVTR…AAII.

Belongs to the glycosyltransferase 4 family. MraY subfamily. Requires Mg(2+) as cofactor.

The protein localises to the cell inner membrane. It carries out the reaction UDP-N-acetyl-alpha-D-muramoyl-L-alanyl-gamma-D-glutamyl-meso-2,6-diaminopimeloyl-D-alanyl-D-alanine + di-trans,octa-cis-undecaprenyl phosphate = di-trans,octa-cis-undecaprenyl diphospho-N-acetyl-alpha-D-muramoyl-L-alanyl-D-glutamyl-meso-2,6-diaminopimeloyl-D-alanyl-D-alanine + UMP. Its pathway is cell wall biogenesis; peptidoglycan biosynthesis. Functionally, catalyzes the initial step of the lipid cycle reactions in the biosynthesis of the cell wall peptidoglycan: transfers peptidoglycan precursor phospho-MurNAc-pentapeptide from UDP-MurNAc-pentapeptide onto the lipid carrier undecaprenyl phosphate, yielding undecaprenyl-pyrophosphoryl-MurNAc-pentapeptide, known as lipid I. This Anaplasma marginale (strain Florida) protein is Phospho-N-acetylmuramoyl-pentapeptide-transferase.